A 1989-amino-acid polypeptide reads, in one-letter code: Zinc finger C3H1 domain-containing protein (1989 aa).

Disordered stretches follow at residues 1 to 133, 148 to 218, 251 to 290, and 310 to 365; these read MATA…RPSF, GRPY…SKNE, SSKE…PEEK, and LPGD…LGED. Ala-2 is modified (N-acetylalanine). Phosphoserine is present on residues Ser-15, Ser-28, and Ser-34. The span at 20–32 shows a compositional bias: acidic residues; that stretch reads GELEDGEISDDDN. A compositionally biased stretch (low complexity) spans 33 to 44; it reads NSQIRSRSSSSS. A compositionally biased stretch (gly residues) spans 62–72; that stretch reads RGGGSGGGGGS. Low complexity-rich tracts occupy residues 114-132, 183-192, and 201-210; these read PPSV…PRPS, GFSSSQSWRE, and KSFGRSPSRK. A Phosphoserine modification is found at Ser-128. Residues 219 to 259 adopt a coiled-coil conformation; sequence NCVEETFEDLLLKYKQIQLELECINKDEKLALSSKEENVQE. The residue at position 251 (Ser-251) is a Phosphoserine. Basic and acidic residues predominate over residues 251-262; it reads SSKEENVQEDPK. A compositionally biased stretch (polar residues) spans 266–279; it reads FEDQTSTDNVSITK. A compositionally biased stretch (basic and acidic residues) spans 280-290; the sequence is DSSKEVAPEEK. Over residues 330-340 the composition is skewed to polar residues; it reads KSDTTDSSQGL. Phosphoserine occurs at positions 352 and 383. Positions 358–389 form a coiled coil; the sequence is SEKKLGEDEEELSELQLRLLALQSASKKWQQK. Disordered stretches follow at residues 385 to 671 and 711 to 770; these read KWQQ…SNLS and LNDS…PEAL. Basic and acidic residues predominate over residues 392 to 402; it reads QVMKESKEKLT. The span at 430-440 shows a compositional bias: basic residues; it reads ALRKQQTKAWK. Residues 432 to 487 adopt a coiled-coil conformation; it reads RKQQTKAWKKLQQQKEQERQKEEDQRKQAEEEERRKREEEIRKIRDLSNQEEQYNR. Basic and acidic residues-rich tracts occupy residues 444-479 and 501-515; these read QQKE…RDLS and KSSD…DKQP. Residues 527–537 are compositionally biased toward acidic residues; that stretch reads NYEEVAMDTDS. Low complexity predominate over residues 574–583; that stretch reads VSSLPPLSQP. Over residues 594–616 the composition is skewed to pro residues; sequence PLPPLPPLPPLPPEDPEQPPKPP. Residues 647–671 are compositionally biased toward polar residues; the sequence is TSSNSDPPSPPVLNNSHPVPRSNLS. 4 positions are modified to phosphoserine: Ser-662, Ser-714, Ser-717, and Ser-719. Residues 755 to 770 show a composition bias toward basic and acidic residues; sequence PKSEKENDPLRTPEAL. Thr-766 is subject to Phosphothreonine. Ser-805 and Ser-809 each carry phosphoserine. Positions 847–909 form a coiled coil; that stretch reads LKNLVQQEAK…QQRVTIKKAL (63 aa). A phosphoserine mark is found at Ser-948, Ser-949, and Ser-953. The stretch at 965–989 forms a coiled coil; the sequence is EKRRLQKLEYEYALKIQKLKEARAL. A phosphoserine mark is found at Ser-998 and Ser-1046. The segment at 1185 to 1206 adopts a C3H1-type zinc-finger fold; that stretch reads FCRFDLTGTCNDDDCQWQHIQD. Phosphoserine occurs at positions 1301, 1303, and 1304. TPR repeat units follow at residues 1361–1400, 1401–1434, 1438–1471, 1478–1511, 1602–1635, 1636–1669, and 1745–1778; these read VQLW…NKDN, PEIW…APDY, WTFL…ETSN, LEAL…ANDG, LPLY…CPIN, CQLL…NPQN, and PYLW…AMRC.

In terms of assembly, component of the poly(A) tail exosome targeting (PAXT) complex made of accessory factors, such as PABPN1, ZFC3H1 and MTREX, and which directs a subset of long and polyadenylated poly(A) RNAs for exosomal degradation. Co-localizes with component of the CBC-ARS2 (CBCA) complex. Binds to RNA exosome components. Interacts with NCBP1/CBP80, ZC3H18, MTREX and PABPN1 in a RNase-insensitive manner, and with PABPC4, PABPC1 and ZC3H14 in a RNase-sensitive manner.

It is found in the nucleus. Its function is as follows. Subunit of the trimeric poly(A) tail exosome targeting (PAXT) complex, a complex that directs a subset of long and polyadenylated poly(A) RNAs for exosomal degradation. The RNA exosome is fundamental for the degradation of RNA in eukaryotic nuclei. Substrate targeting is facilitated by its cofactor MTREX, which links to RNA-binding protein adapters. This chain is Zinc finger C3H1 domain-containing protein (ZFC3H1), found in Homo sapiens (Human).